Reading from the N-terminus, the 340-residue chain is MSNQTPYIGSKISLISKLDIRYEGILYTVDTNDSTIALAKVRSFGTEKRPTANPVAARDDVYEYIIFKASDIKDLIVCDTPKMANIGGGLPYDPAIISVSSRSAPASDGAPAASAGSSRAGTPSRNSPLGQIIQNQRPGRGGYQQNFQANRGYNNYRGGFAGGYNNQRGHNNYGVPRVNHREKLKFESDFDFEKANEKFQEVLVDNLEKLNIEDKAEPEVEEKKDAAFYDKKTSFFDNISCESLEKAEGKTGRPDWKKERETNQETFGHNAVRSLNYRRGFGGRGRGGNRGYGGYNNGYQHQHQHRGGYNGGYRQNNGGYRRGGYAPRDNQGNTAAAAEQ.

The 81-residue stretch at 1–81 (MSNQTPYIGS…IKDLIVCDTP (81 aa)) folds into the Sm domain. The segment covering 101 to 125 (SRSAPASDGAPAASAGSSRAGTPSR) has biased composition (low complexity). The disordered stretch occupies residues 101–148 (SRSAPASDGAPAASAGSSRAGTPSRNSPLGQIIQNQRPGRGGYQQNFQ). Positions 126-148 (NSPLGQIIQNQRPGRGGYQQNFQ) are enriched in polar residues. The region spanning 178-214 (VNHREKLKFESDFDFEKANEKFQEVLVDNLEKLNIED) is the DFDF domain. The short motif at 227 to 243 (AFYDKKTSFFDNISCES) is the FFD box element. Positions 251–271 (TGRPDWKKERETNQETFGHNA) match the TFG box motif. Residues 277 to 340 (YRRGFGGRGR…QGNTAAAAEQ (64 aa)) form a disordered region. Residues 280–296 (GFGGRGRGGNRGYGGYN) show a composition bias toward gly residues. Residues 312–325 (GYRQNNGGYRRGGY) show a composition bias toward low complexity.

Belongs to the LSM14 family.

The protein resides in the nucleus. Transcriptional regulator. Involved in modulating embryonic expression of ATP-dependent chaperone cdc-48.1. May play a role in mRNA gene silencing, and RNA granule (P-body) assembly. This chain is Protein LSM14 homolog car-1, found in Caenorhabditis elegans.